The primary structure comprises 699 residues: UvrABC system protein C (699 aa).

Residues 1 to 51 (MIQHPTDTPEVAADAAAEPERAAGAAGATPQPSQDAVEPAADVDAATASLA) are compositionally biased toward low complexity. Positions 1 to 59 (MIQHPTDTPEVAADAAAEPERAAGAAGATPQPSQDAVEPAADVDAATASLAAEDDDEPV) are disordered. In terms of domain architecture, GIY-YIG spans 92-170 (TSPGVYRMLN…IKQLRPRFNV (79 aa)). One can recognise a UVR domain in the interval 280-315 (RLVKQELAGEMEKASAELEFETAALYRDRLAALSAI).

Belongs to the UvrC family. Interacts with UvrB in an incision complex.

The protein localises to the cytoplasm. The UvrABC repair system catalyzes the recognition and processing of DNA lesions. UvrC both incises the 5' and 3' sides of the lesion. The N-terminal half is responsible for the 3' incision and the C-terminal half is responsible for the 5' incision. The sequence is that of UvrABC system protein C from Rhodopseudomonas palustris (strain BisB18).